Consider the following 391-residue polypeptide: Mannose-6-phosphate isomerase (391 aa).

Residues glutamine 97, histidine 99, glutamate 134, and histidine 255 each coordinate Zn(2+). The active site involves arginine 274. Lysine 280 is subject to N6-acetyllysine.

It belongs to the mannose-6-phosphate isomerase type 1 family. The cofactor is Zn(2+).

It is found in the cytoplasm. The catalysed reaction is D-mannose 6-phosphate = D-fructose 6-phosphate. Functionally, involved in the conversion of glucose to GDP-L-fucose, which can be converted to L-fucose, a capsular polysaccharide. The protein is Mannose-6-phosphate isomerase (manA) of Shigella flexneri.